A 634-amino-acid chain; its full sequence is Dachshund homolog 2 (634 aa).

Residues 76–162 (RMVDMHGVKV…LITRKDFETL (87 aa)) form a DACHbox-N region. 3 disordered regions span residues 171-194 (RKRQ…KRSL), 244-286 (LQGN…SGPQ), and 378-416 (IPES…MDHH). Positions 244–269 (LQGNGSQNGTESEPDDLNSTTGGSES) are enriched in polar residues. Positions 396 to 412 (SQTSSHPSSSVSSSPSQ) are enriched in low complexity. Residues 488–568 (SSVETLLTNI…KAKRKLQEAL (81 aa)) form a DACHbox-C region. Positions 494-588 (LTNIQGLLKV…EQALKQATSG (95 aa)) form a coiled coil.

This sequence belongs to the DACH/dachshund family. Interacts with SIX6. Interacts with EYA2. As to expression, expressed in embryo, and at lower levels in the newborn.

The protein localises to the nucleus. Its function is as follows. Transcription factor that is involved in regulation of organogenesis. Seems to be a regulator for SIX1 and SIX6. Seems to act as a corepressor of SIX6 in regulating proliferation by directly repressing cyclin-dependent kinase inhibitors, including the p27Kip1 promoter. Is recruited with SIX6 to the p27Kip1 promoter in embryonal retina. SIX6 corepression also seems to involve NCOR1, TBL1, HDAC1 and HDAC3. May be involved together with PAX3, SIX1, and EYA2 in regulation of myogenesis. In the developing somite, expression of DACH2 and PAX3 is regulated by the overlying ectoderm, and DACH2 and PAX3 positively regulate each other's expression. Probably binds to DNA via its DACHbox-N domain. This Mus musculus (Mouse) protein is Dachshund homolog 2 (Dach2).